A 189-amino-acid polypeptide reads, in one-letter code: Protein Rex (189 aa).

Basic residues predominate over residues 1–16; the sequence is MPKTRRRPRRSQRKRP. Residues 1-27 form a disordered region; sequence MPKTRRRPRRSQRKRPPTPWPTSQGLD. Residues 2–18 carry the Nuclear localization signal, and RNA-binding (RxRE) motif; sequence PKTRRRPRRSQRKRPPT. The tract at residues 56–70 is homomultimerization; sequence RPAYIVTPYWPPVQS. Position 70 is a phosphoserine; by host (Ser-70). The short motif at 82-93 is the Nuclear export signal element; sequence LSAQLYSSLSLD. The tract at residues 87–189 is disordered; that stretch reads YSSLSLDSPP…PPSPGPSCPM (103 aa). Residues 105–114 are compositionally biased toward low complexity; sequence PLRSLPRQSL. The segment at 123–131 is homomultimerization; that stretch reads PSSRPCANT. Polar residues predominate over residues 143-164; sequence LGSTSQPCLFQTPDSGPKTCTP. Thr-174 is modified (phosphothreonine; by host). Ser-177 is subject to Phosphoserine; by host. The segment covering 178–189 has biased composition (pro residues); sequence FPPPSPGPSCPM.

The protein belongs to the deltaretrovirus Rex protein family. As to quaternary structure, homomultimer. Multimeric assembly is essential for activity and involves XPO1. Binds to human XPO1 and KPNB1. Interacts (via N-terminal nuclear localization signal) with human NPM1. In terms of processing, phosphorylated.

Its subcellular location is the host nucleus. The protein resides in the host nucleolus. The protein localises to the host cytoplasm. Functionally, rex escorts unspliced gag-pro-pol and singly spliced env mRNAs out of the nucleus of infected cells. These mRNAs carry a recognition sequence called Rex responsive element (RxRE or XRE) located at the 3' region of the long terminal repeat (LTR). This function is essential since most HTLV proteins are translated from unspliced or partially spliced pre-mRNAs that cannot exit the nucleus by the pathway used by fully processed cellular mRNAs. Rex itself is translated from a fully spliced mRNA that probably readily exits the nucleus. Rex's nuclear localization signal (NLS) binds directly to KPNB1/importin beta-1 without previous binding to KPNA1/importin alpha-1. KPNB1 binds to the GDP bound form of RAN (Ran-GDP) and targets Rex to the nucleus. In the nucleus, the conversion from Ran-GDP to Ran-GTP dissociates Rex from KPNB1 and allows Rex's binding to the RRE in viral pre-mRNAs. Rex multimerizes on the RRE via cooperative assembly. This multimerization is critical for its full biological activity, since it may shield the viral RNA from being spliced or down-regulated, and probably exposes Rex's nuclear export signal (NES) to the surface. Rex can then form a complex with XPO1/CRM1, RANBP3 and Ran-GTP, leading to nuclear export of the complex. Conversion from Ran-GTP to Ran-GDP mediates dissociation of the Rex/RRE/XPO1/RANBP3/RAN complex, so that Rex can return to the nucleus for a subsequent round of export. This chain is Protein Rex, found in Human T-cell leukemia virus 1 (isolate Caribbea HS-35 subtype A) (HTLV-1).